The following is a 184-amino-acid chain: Photosystem I assembly protein Ycf4 (184 aa).

A run of 2 helical transmembrane segments spans residues 22–42 (FCWA…GTSS) and 57–77 (IIFF…LFIS).

It belongs to the Ycf4 family.

It localises to the plastid. It is found in the chloroplast thylakoid membrane. Seems to be required for the assembly of the photosystem I complex. The chain is Photosystem I assembly protein Ycf4 from Arabis hirsuta (Hairy rock-cress).